A 185-amino-acid chain; its full sequence is Ribosome maturation factor RimM (185 aa).

The PRC barrel domain occupies 103–177 (SEEYYWYEIL…SIIVKKIEWY (75 aa)).

Belongs to the RimM family. In terms of assembly, binds ribosomal protein uS19.

It localises to the cytoplasm. An accessory protein needed during the final step in the assembly of 30S ribosomal subunit, possibly for assembly of the head region. Essential for efficient processing of 16S rRNA. May be needed both before and after RbfA during the maturation of 16S rRNA. It has affinity for free ribosomal 30S subunits but not for 70S ribosomes. This chain is Ribosome maturation factor RimM, found in Petrotoga mobilis (strain DSM 10674 / SJ95).